Here is a 374-residue protein sequence, read N- to C-terminus: N-acetyldiaminopimelate deacetylase (374 aa).

Asp-69 is a catalytic residue. The active-site Proton acceptor is Glu-128.

It belongs to the peptidase M20A family. N-acetyldiaminopimelate deacetylase subfamily.

The catalysed reaction is N-acetyl-(2S,6S)-2,6-diaminopimelate + H2O = (2S,6S)-2,6-diaminopimelate + acetate. It functions in the pathway amino-acid biosynthesis; L-lysine biosynthesis via DAP pathway; LL-2,6-diaminopimelate from (S)-tetrahydrodipicolinate (acetylase route): step 3/3. In terms of biological role, catalyzes the conversion of N-acetyl-diaminopimelate to diaminopimelate and acetate. In Bacillus licheniformis (strain ATCC 14580 / DSM 13 / JCM 2505 / CCUG 7422 / NBRC 12200 / NCIMB 9375 / NCTC 10341 / NRRL NRS-1264 / Gibson 46), this protein is N-acetyldiaminopimelate deacetylase.